Here is a 293-residue protein sequence, read N- to C-terminus: 4-hydroxy-tetrahydrodipicolinate synthase (293 aa).

A pyruvate-binding site is contributed by threonine 47. Tyrosine 135 (proton donor/acceptor) is an active-site residue. The Schiff-base intermediate with substrate role is filled by lysine 164. Isoleucine 206 lines the pyruvate pocket.

This sequence belongs to the DapA family. As to quaternary structure, homotetramer; dimer of dimers.

The protein localises to the cytoplasm. It catalyses the reaction L-aspartate 4-semialdehyde + pyruvate = (2S,4S)-4-hydroxy-2,3,4,5-tetrahydrodipicolinate + H2O + H(+). It functions in the pathway amino-acid biosynthesis; L-lysine biosynthesis via DAP pathway; (S)-tetrahydrodipicolinate from L-aspartate: step 3/4. Catalyzes the condensation of (S)-aspartate-beta-semialdehyde [(S)-ASA] and pyruvate to 4-hydroxy-tetrahydrodipicolinate (HTPA). This is 4-hydroxy-tetrahydrodipicolinate synthase from Flavobacterium psychrophilum (strain ATCC 49511 / DSM 21280 / CIP 103535 / JIP02/86).